A 187-amino-acid polypeptide reads, in one-letter code: UPF0301 protein ECA3925 (187 aa).

The protein belongs to the UPF0301 (AlgH) family.

The chain is UPF0301 protein ECA3925 from Pectobacterium atrosepticum (strain SCRI 1043 / ATCC BAA-672) (Erwinia carotovora subsp. atroseptica).